The chain runs to 647 residues: MTRLFIAEKPSLARAIADALPKPHKKEQGCIRCANGDIVTWCIGHLLEQVEPDAYDERYKKWNMADLPIIPEQWQLRPRKSSSQQLTVVRKLLKEATQIIHAGDPDREGQLLVDEVIDYCKVPKSKKETVQRLLISDLNLSAVKRALQGLRSNREFIPLSVSALARSRADWLYGMNMSRAYTLLGKKAGYQGVLSVGRVQTPVLGLVVRRDEEIEHFIPHDYFTLDALIPYQNGTEYFDIRARWKPSEACLPWQDEEGRVTNRKLVDNVASRIANQPATVTESEQDQTKQAAPLPYSLSALQIDAAKRYNFSAQQVLDLCQSLYEKHKLITYPRSDCRYLPKEHLAQAPDVVAAIANNAQEMVTAVNDADLSLRSKAWNDSKVDAHHAIIPTPKKASVNALSGHEMKVYQLIARQYLMQFYPAAIYAEAKLVFNIAGGIFIAKGRQLLSAGWKVLTGQQDEQEECVDKVPPLPVGIVLQCREGEIKQRQTEPPRHFTEATLLQAMTGIARFVADKELKKILRETDGLGTEATRAGILDTLFKRGLLQRDNKLIKSTPAGRGLIHALPSEATYPDMTAHWEHQLQAIAEKGQAYQPFMQTLQGRLEQLIEQVQVAPVPVSLQALPAVSKPAFKRTRRAPKSKARTYKA.

The Toprim domain maps to 2 to 135 (TRLFIAEKPS…KKETVQRLLI (134 aa)). Mg(2+)-binding residues include E8, D104, and D106. One can recognise a Topo IA-type catalytic domain in the interval 156–608 (FIPLSVSALA…TLQGRLEQLI (453 aa)). The interaction with DNA stretch occupies residues 195 to 200 (SVGRVQ). Y332 functions as the O-(5'-phospho-DNA)-tyrosine intermediate in the catalytic mechanism.

This sequence belongs to the type IA topoisomerase family. It depends on Mg(2+) as a cofactor.

The catalysed reaction is ATP-independent breakage of single-stranded DNA, followed by passage and rejoining.. In terms of biological role, releases the supercoiling and torsional tension of DNA, which is introduced during the DNA replication and transcription, by transiently cleaving and rejoining one strand of the DNA duplex. Introduces a single-strand break via transesterification at a target site in duplex DNA. The scissile phosphodiester is attacked by the catalytic tyrosine of the enzyme, resulting in the formation of a DNA-(5'-phosphotyrosyl)-enzyme intermediate and the expulsion of a 3'-OH DNA strand. The free DNA strand then undergoes passage around the unbroken strand, thus removing DNA supercoils. Finally, in the religation step, the DNA 3'-OH attacks the covalent intermediate to expel the active-site tyrosine and restore the DNA phosphodiester backbone. The sequence is that of DNA topoisomerase 3 from Vibrio cholerae serotype O1 (strain ATCC 39315 / El Tor Inaba N16961).